We begin with the raw amino-acid sequence, 484 residues long: Cobyric acid synthase (484 aa).

The GATase cobBQ-type domain occupies 251–438 (ALKIAVPVLP…LHGLFGSDAY (188 aa)). C333 (nucleophile) is an active-site residue. The active site involves H430.

This sequence belongs to the CobB/CobQ family. CobQ subfamily.

It functions in the pathway cofactor biosynthesis; adenosylcobalamin biosynthesis. Its function is as follows. Catalyzes amidations at positions B, D, E, and G on adenosylcobyrinic A,C-diamide. NH(2) groups are provided by glutamine, and one molecule of ATP is hydrogenolyzed for each amidation. The chain is Cobyric acid synthase from Rhizobium leguminosarum bv. trifolii (strain WSM2304).